The following is a 1370-amino-acid chain: DNA-directed RNA polymerase subunit beta (1370 aa).

This sequence belongs to the RNA polymerase beta chain family. In terms of assembly, the RNAP catalytic core consists of 2 alpha, 1 beta, 1 beta' and 1 omega subunit. When a sigma factor is associated with the core the holoenzyme is formed, which can initiate transcription.

It carries out the reaction RNA(n) + a ribonucleoside 5'-triphosphate = RNA(n+1) + diphosphate. DNA-dependent RNA polymerase catalyzes the transcription of DNA into RNA using the four ribonucleoside triphosphates as substrates. The protein is DNA-directed RNA polymerase subunit beta of Bordetella parapertussis (strain 12822 / ATCC BAA-587 / NCTC 13253).